Consider the following 96-residue polypeptide: Large ribosomal subunit protein bL21 (96 aa).

Belongs to the bacterial ribosomal protein bL21 family. In terms of assembly, part of the 50S ribosomal subunit. Contacts protein L20.

In terms of biological role, this protein binds to 23S rRNA in the presence of protein L20. The polypeptide is Large ribosomal subunit protein bL21 (Sulfurihydrogenibium sp. (strain YO3AOP1)).